The chain runs to 237 residues: Type III pantothenate kinase (237 aa).

6–13 (DAGNSRVK) serves as a coordination point for ATP. Substrate is bound by residues Tyr-86 and 93-96 (GADR). Catalysis depends on Asp-95, which acts as the Proton acceptor. Position 118 (Thr-118) interacts with ATP. Residue Thr-168 coordinates substrate.

Belongs to the type III pantothenate kinase family. In terms of assembly, homodimer. NH4(+) serves as cofactor. The cofactor is K(+).

Its subcellular location is the cytoplasm. It catalyses the reaction (R)-pantothenate + ATP = (R)-4'-phosphopantothenate + ADP + H(+). The protein operates within cofactor biosynthesis; coenzyme A biosynthesis; CoA from (R)-pantothenate: step 1/5. In terms of biological role, catalyzes the phosphorylation of pantothenate (Pan), the first step in CoA biosynthesis. This Chromobacterium violaceum (strain ATCC 12472 / DSM 30191 / JCM 1249 / CCUG 213 / NBRC 12614 / NCIMB 9131 / NCTC 9757 / MK) protein is Type III pantothenate kinase.